The primary structure comprises 428 residues: MSAFIVLGSQWGDEGKGKMTDYLAKDVDVVVRFQGGNNAGHTVRVGDKEYKLHIIPSGILYKDKVNVIGNGVVLDPEALFQEIDYLEKAGVDIQPDNLMISDRAQLIMPYHKVLDGIKERSRGKKDIGTTGKGIGPCYTDKMERSGIRVCDLINQDVFKENLKENLKIKNDIITKVYGEEALDFDSICDQYIEYRKKLAPYVKDISVEVYNSIKNDKKVLFEGAQGTLLDIDYGTYPYVTSSSTIAGGVCIGAGIGPTLITGAIGVAKAYTTRVGKGPFPTELFDDTGDWIRKSGREYGVTTGRARRCGWLDLVILKTSSRVSGLTNFAITKIDTLGGLEKVKVCTGYKFNGKIIDYVPASLQDLAKCEPVYEEFDGWDKDIENAKTYDELPENAKIYLNKIEEFTNTKISIVSVGPGRDQTINLNNM.

GTP-binding positions include 12–18 (GDEGKGK) and 40–42 (GHT). D13 functions as the Proton acceptor in the catalytic mechanism. D13 and G40 together coordinate Mg(2+). IMP-binding positions include 13 to 16 (DEGK), 38 to 41 (NAGH), T130, R144, Q225, T240, and R304. H41 acts as the Proton donor in catalysis. Residue 300–306 (VTTGRAR) coordinates substrate. GTP is bound by residues R306, 332-334 (KID), and 414-416 (SVG).

It belongs to the adenylosuccinate synthetase family. As to quaternary structure, homodimer. The cofactor is Mg(2+).

It is found in the cytoplasm. It catalyses the reaction IMP + L-aspartate + GTP = N(6)-(1,2-dicarboxyethyl)-AMP + GDP + phosphate + 2 H(+). The protein operates within purine metabolism; AMP biosynthesis via de novo pathway; AMP from IMP: step 1/2. Its function is as follows. Plays an important role in the de novo pathway of purine nucleotide biosynthesis. Catalyzes the first committed step in the biosynthesis of AMP from IMP. This Clostridium kluyveri (strain ATCC 8527 / DSM 555 / NBRC 12016 / NCIMB 10680 / K1) protein is Adenylosuccinate synthetase.